A 192-amino-acid polypeptide reads, in one-letter code: uncharacterized protein (192 aa).

The Nudix hydrolase domain maps to 29–160 (HRQAAVLIPI…PLDIYRRGDS (132 aa)). The short motif at 67 to 89 (GAVDDTDASVIAAALREAEEEVA) is the Nudix box element. Mg(2+) is bound by residues Glu-83 and Glu-87.

This sequence belongs to the Nudix hydrolase family. PCD1 subfamily. Mn(2+) is required as a cofactor. It depends on Mg(2+) as a cofactor.

Functionally, probably mediates the hydrolysis of some nucleoside diphosphate derivatives. This is an uncharacterized protein from Escherichia coli (strain SE11).